The sequence spans 238 residues: MSQMTYKRVLLKLSGESLAGRQLTGIDPDTVAVLCNELSSVIELGLQIALVIGGGNIFRGLSASAKGMDRSSADYMGMLATVLNALAIQDTLEKKGHPTRVLSAIAMQEVCEPYVRRRAMRHLEKGRVIICAAGTGNPYFTTDTAAALRCMELKCDALIKATRVDGVYDKDPLKFDDAEMFKHLTYEETLRRHIKIMDSTAITLAQENNIPIIVCNMFNGSIKRAILGQNPGTTVEGE.

12 to 15 is an ATP binding site; sequence KLSG. Residue G54 participates in UMP binding. ATP is bound by residues G55 and R59. Residues D74 and 135-142 each bind UMP; that span reads TGNPYFTT. ATP contacts are provided by T162, Y168, and D171.

This sequence belongs to the UMP kinase family. In terms of assembly, homohexamer.

The protein resides in the cytoplasm. It carries out the reaction UMP + ATP = UDP + ADP. It participates in pyrimidine metabolism; CTP biosynthesis via de novo pathway; UDP from UMP (UMPK route): step 1/1. Its activity is regulated as follows. Inhibited by UTP. Functionally, catalyzes the reversible phosphorylation of UMP to UDP. In Lawsonia intracellularis (strain PHE/MN1-00), this protein is Uridylate kinase.